Consider the following 344-residue polypeptide: Anthranilate phosphoribosyltransferase (344 aa).

5-phospho-alpha-D-ribose 1-diphosphate-binding positions include Gly-84, Gly-87–Asp-88, Thr-92, Asn-94–Thr-97, Lys-112–Ser-120, and Ser-124. Gly-84 lines the anthranilate pocket. Ser-96 contributes to the Mg(2+) binding site. Asn-115 contributes to the anthranilate binding site. Arg-170 is a binding site for anthranilate. Asp-229 and Glu-230 together coordinate Mg(2+).

The protein belongs to the anthranilate phosphoribosyltransferase family. Homodimer. It depends on Mg(2+) as a cofactor.

It catalyses the reaction N-(5-phospho-beta-D-ribosyl)anthranilate + diphosphate = 5-phospho-alpha-D-ribose 1-diphosphate + anthranilate. Its pathway is amino-acid biosynthesis; L-tryptophan biosynthesis; L-tryptophan from chorismate: step 2/5. Catalyzes the transfer of the phosphoribosyl group of 5-phosphorylribose-1-pyrophosphate (PRPP) to anthranilate to yield N-(5'-phosphoribosyl)-anthranilate (PRA). The protein is Anthranilate phosphoribosyltransferase of Xylella fastidiosa (strain 9a5c).